A 505-amino-acid chain; its full sequence is Aspartyl/glutamyl-tRNA(Asn/Gln) amidotransferase subunit B (505 aa).

Belongs to the GatB/GatE family. GatB subfamily. In terms of assembly, heterotrimer of A, B and C subunits.

The enzyme catalyses L-glutamyl-tRNA(Gln) + L-glutamine + ATP + H2O = L-glutaminyl-tRNA(Gln) + L-glutamate + ADP + phosphate + H(+). The catalysed reaction is L-aspartyl-tRNA(Asn) + L-glutamine + ATP + H2O = L-asparaginyl-tRNA(Asn) + L-glutamate + ADP + phosphate + 2 H(+). Allows the formation of correctly charged Asn-tRNA(Asn) or Gln-tRNA(Gln) through the transamidation of misacylated Asp-tRNA(Asn) or Glu-tRNA(Gln) in organisms which lack either or both of asparaginyl-tRNA or glutaminyl-tRNA synthetases. The reaction takes place in the presence of glutamine and ATP through an activated phospho-Asp-tRNA(Asn) or phospho-Glu-tRNA(Gln). In Dinoroseobacter shibae (strain DSM 16493 / NCIMB 14021 / DFL 12), this protein is Aspartyl/glutamyl-tRNA(Asn/Gln) amidotransferase subunit B.